The following is a 150-amino-acid chain: UPF0178 protein Shewana3_1627 (150 aa).

It belongs to the UPF0178 family.

This Shewanella sp. (strain ANA-3) protein is UPF0178 protein Shewana3_1627.